We begin with the raw amino-acid sequence, 305 residues long: Methionyl-tRNA formyltransferase (305 aa).

Residue 111-114 (SLLP) coordinates (6S)-5,6,7,8-tetrahydrofolate.

The protein belongs to the Fmt family.

The catalysed reaction is L-methionyl-tRNA(fMet) + (6R)-10-formyltetrahydrofolate = N-formyl-L-methionyl-tRNA(fMet) + (6S)-5,6,7,8-tetrahydrofolate + H(+). Its function is as follows. Attaches a formyl group to the free amino group of methionyl-tRNA(fMet). The formyl group appears to play a dual role in the initiator identity of N-formylmethionyl-tRNA by promoting its recognition by IF2 and preventing the misappropriation of this tRNA by the elongation apparatus. This chain is Methionyl-tRNA formyltransferase, found in Helicobacter pylori (strain P12).